The chain runs to 807 residues: Glycerol-3-phosphate acyltransferase (807 aa).

The short motif at 305–310 is the HXXXXD motif element; that stretch reads CHRSHM.

It belongs to the GPAT/DAPAT family.

Its subcellular location is the cell inner membrane. It catalyses the reaction sn-glycerol 3-phosphate + an acyl-CoA = a 1-acyl-sn-glycero-3-phosphate + CoA. It participates in phospholipid metabolism; CDP-diacylglycerol biosynthesis; CDP-diacylglycerol from sn-glycerol 3-phosphate: step 1/3. This is Glycerol-3-phosphate acyltransferase from Klebsiella pneumoniae subsp. pneumoniae (strain ATCC 700721 / MGH 78578).